The chain runs to 560 residues: Mannosyl-oligosaccharide 1,2-alpha-mannosidase MNS1 (560 aa).

Over 1-27 the chain is Cytoplasmic; sequence MARSRSISGYGIWKYLNPAYYLRRPRR. The chain crosses the membrane as a helical; Signal-anchor for type II membrane protein span at residues 28–47; the sequence is LALLFIVFVSVSMLVWDRIN. Residues 47-80 adopt a coiled-coil conformation; sequence NLAREHEVEVFKLNEEVSRLEQMLEELNGGVGNK. The Lumenal portion of the chain corresponds to 48 to 560; that stretch reads LAREHEVEVF…QRKFGHQINV (513 aa). Glu179 (proton donor) is an active-site residue. Asp312 is a catalytic residue. N-linked (GlcNAc...) asparagine glycosylation occurs at Asn326. Cys377 and Cys409 are oxidised to a cystine. Catalysis depends on Glu423, which acts as the Proton donor. Residue Glu445 is part of the active site. Residue Asn459 is glycosylated (N-linked (GlcNAc...) asparagine). Residue Thr529 participates in Ca(2+) binding.

Belongs to the glycosyl hydrolase 47 family. Requires Ca(2+) as cofactor. The cofactor is Mn(2+). It depends on Mg(2+) as a cofactor. As to expression, expressed in flowers, siliques, stems, leaves, roots, pollen grains, shoot apical meristems, hypocotyls and upper region of the root.

Its subcellular location is the golgi apparatus membrane. It carries out the reaction N(4)-(alpha-D-Man-(1-&gt;2)-alpha-D-Man-(1-&gt;2)-alpha-D-Man-(1-&gt;3)-[alpha-D-Man-(1-&gt;2)-alpha-D-Man-(1-&gt;3)-[alpha-D-Man-(1-&gt;2)-alpha-D-Man-(1-&gt;6)]-alpha-D-Man-(1-&gt;6)]-beta-D-Man-(1-&gt;4)-beta-D-GlcNAc-(1-&gt;4)-beta-D-GlcNAc)-L-asparaginyl-[protein] (N-glucan mannose isomer 9A1,2,3B1,2,3) + 4 H2O = N(4)-(alpha-D-Man-(1-&gt;3)-[alpha-D-Man-(1-&gt;3)-[alpha-D-Man-(1-&gt;6)]-alpha-D-Man-(1-&gt;6)]-beta-D-Man-(1-&gt;4)-beta-D-GlcNAc-(1-&gt;4)-beta-D-GlcNAc)-L-asparaginyl-[protein] (N-glucan mannose isomer 5A1,2) + 4 beta-D-mannose. The enzyme catalyses N(4)-(alpha-D-Man-(1-&gt;2)-alpha-D-Man-(1-&gt;2)-alpha-D-Man-(1-&gt;3)-[alpha-D-Man-(1-&gt;3)-[alpha-D-Man-(1-&gt;2)-alpha-D-Man-(1-&gt;6)]-alpha-D-Man-(1-&gt;6)]-beta-D-Man-(1-&gt;4)-beta-D-GlcNAc-(1-&gt;4)-beta-D-GlcNAc)-L-asparaginyl-[protein] (N-glucan mannose isomer 8A1,2,3B1,3) + 3 H2O = N(4)-(alpha-D-Man-(1-&gt;3)-[alpha-D-Man-(1-&gt;3)-[alpha-D-Man-(1-&gt;6)]-alpha-D-Man-(1-&gt;6)]-beta-D-Man-(1-&gt;4)-beta-D-GlcNAc-(1-&gt;4)-beta-D-GlcNAc)-L-asparaginyl-[protein] (N-glucan mannose isomer 5A1,2) + 3 beta-D-mannose. The catalysed reaction is N(4)-(alpha-D-Man-(1-&gt;2)-alpha-D-Man-(1-&gt;2)-alpha-D-Man-(1-&gt;3)-[alpha-D-Man-(1-&gt;2)-alpha-D-Man-(1-&gt;3)-[alpha-D-Man-(1-&gt;2)-alpha-D-Man-(1-&gt;6)]-alpha-D-Man-(1-&gt;6)]-beta-D-Man-(1-&gt;4)-beta-D-GlcNAc-(1-&gt;4)-beta-D-GlcNAc)-L-asparaginyl-[protein] (N-glucan mannose isomer 9A1,2,3B1,2,3) + H2O = N(4)-(alpha-D-Man-(1-&gt;2)-alpha-D-Man-(1-&gt;2)-alpha-D-Man-(1-&gt;3)-[alpha-D-Man-(1-&gt;3)-[alpha-D-Man-(1-&gt;2)-alpha-D-Man-(1-&gt;6)]-alpha-D-Man-(1-&gt;6)]-beta-D-Man-(1-&gt;4)-beta-D-GlcNAc-(1-&gt;4)-beta-D-GlcNAc)-L-asparaginyl-[protein] (N-glucan mannose isomer 8A1,2,3B1,3) + beta-D-mannose. It participates in protein modification; protein glycosylation. With respect to regulation, inhibited by kifunensine and 1-deoxymannojirimycin, but not by swainsonine. Functionally, class I alpha-mannosidase essential for early N-glycan processing. Progressively trims alpha-1,2-linked mannose residues. Produces Man(5)GlcNAc(2) from Man(8)GlcNAc(2), but only Man(6)GlcNAc(2) from Man(9)GlcNAc(2). Has difficulty acting on the terminal mannose of the b-branch. Involved in root development and cell wall biosynthesis. The sequence is that of Mannosyl-oligosaccharide 1,2-alpha-mannosidase MNS1 (MNS1) from Arabidopsis thaliana (Mouse-ear cress).